A 510-amino-acid chain; its full sequence is Bifunctional purine biosynthesis protein PurH (510 aa).

The MGS-like domain occupies 1-144 (MSKRALISVT…KNYKDVIVVV (144 aa)).

The protein belongs to the PurH family.

It carries out the reaction (6R)-10-formyltetrahydrofolate + 5-amino-1-(5-phospho-beta-D-ribosyl)imidazole-4-carboxamide = 5-formamido-1-(5-phospho-D-ribosyl)imidazole-4-carboxamide + (6S)-5,6,7,8-tetrahydrofolate. It catalyses the reaction IMP + H2O = 5-formamido-1-(5-phospho-D-ribosyl)imidazole-4-carboxamide. The protein operates within purine metabolism; IMP biosynthesis via de novo pathway; 5-formamido-1-(5-phospho-D-ribosyl)imidazole-4-carboxamide from 5-amino-1-(5-phospho-D-ribosyl)imidazole-4-carboxamide (10-formyl THF route): step 1/1. It participates in purine metabolism; IMP biosynthesis via de novo pathway; IMP from 5-formamido-1-(5-phospho-D-ribosyl)imidazole-4-carboxamide: step 1/1. In Clostridioides difficile (strain 630) (Peptoclostridium difficile), this protein is Bifunctional purine biosynthesis protein PurH.